Consider the following 4588-residue polypeptide: Protocadherin Fat 1 (4588 aa).

A signal peptide spans 1-21 (MGRHLALLLLLLLLFQHFGDS). The Extracellular segment spans residues 22–4181 (DGSQRLEQTP…STPWNIGLAE (4160 aa)). 2 consecutive Cadherin domains span residues 35-149 (THLE…RPLF) and 150-257 (SPTS…APVI). Asn-40 is a glycosylation site (N-linked (GlcNAc...) asparagine). Asn-333 carries an N-linked (GlcNAc...) asparagine glycan. 31 Cadherin domains span residues 368–463 (EKDV…PPEF), 464–569 (TQTA…TPLF), 570–673 (EKIN…VNLQ), 718–822 (STLP…PPEF), 823–927 (LQES…PPTF), 928–1034 (IPPN…PPVF), 1035–1139 (SSFV…APQT), 1140–1245 (SEPV…KPQF), 1246–1357 (LQKF…EPIS), 1359–1456 (EESF…RPQF), 1457–1562 (STSK…APWF), 1563–1667 (TASS…SPKF), 1668–1765 (TSKE…APVF), 1766–1879 (MQAE…PPVF), 1880–1979 (AKPL…HLKF), 1980–2081 (TQDV…APVF), 2082–2182 (VNLP…MPVF), 2183–2283 (EKPF…PPVF), 2284–2390 (AQQS…PPLF), 2391–2492 (EQQI…SPAF), 2493–2596 (LQNE…APQF), 2597–2703 (RATK…LPKF), 2704–2809 (SEPF…SPVF), 2810–2918 (ESSP…PPRF), 2919–3023 (TAEI…SPVC), 3024–3125 (EKTL…APEF), 3126–3230 (SADP…PPVF), 3231–3335 (EYRE…TPVF), 3336–3440 (SQDT…APVF), 3441–3545 (SRGN…PPAI), and 3546–3647 (LPLE…AIRF). N-linked (GlcNAc...) asparagine glycans are attached at residues Asn-660, Asn-740, and Asn-791. Residue Asn-998 is glycosylated (N-linked (GlcNAc...) asparagine). Asn-1426 and Asn-1551 each carry an N-linked (GlcNAc...) asparagine glycan. Asn-1748, Asn-1864, Asn-1902, Asn-1940, and Asn-1991 each carry an N-linked (GlcNAc...) asparagine glycan. Asn-2325 and Asn-2464 each carry an N-linked (GlcNAc...) asparagine glycan. 6 N-linked (GlcNAc...) asparagine glycosylation sites follow: Asn-3324, Asn-3422, Asn-3444, Asn-3613, Asn-3640, and Asn-3716. An EGF-like 1 domain is found at 3790–3827 (VHHGCEDDPCPEGSECVSDPWEEKHTCVCPSGRFGQCP). Disulfide bonds link Cys-3794–Cys-3805, Cys-3799–Cys-3816, Cys-3818–Cys-3826, Cys-3976–Cys-4009, Cys-4017–Cys-4028, Cys-4022–Cys-4038, Cys-4040–Cys-4049, Cys-4056–Cys-4067, Cys-4061–Cys-4076, Cys-4078–Cys-4087, Cys-4093–Cys-4104, Cys-4098–Cys-4113, Cys-4115–Cys-4124, Cys-4131–Cys-4142, and Cys-4136–Cys-4151. A Laminin G-like domain is found at 3829 to 4009 (SSSMTLTGNS…EESVDVSPGC (181 aa)). 3 consecutive EGF-like domains span residues 4013–4050 (ATED…THCE), 4052–4088 (SVNP…QRCQ), and 4089–4125 (LSPY…ERCQ). One can recognise an EGF-like 5; calcium-binding domain in the interval 4127-4163 (DIDECSGNPCLHGALCENTHGSYHCNCSHEYRGRHCE). An N-linked (GlcNAc...) asparagine glycan is attached at Asn-4152. Cysteines 4153 and 4162 form a disulfide. The helical transmembrane segment at 4182 to 4202 (GIGIVVFVAGIFLLVVVFVLC) threads the bilayer. The Cytoplasmic segment spans residues 4203 to 4588 (RKMISRKKKH…PLDSQQHTEV (386 aa)). The short motif at 4204 to 4214 (KMISRKKKHQA) is the Nuclear localization signal element. Disordered regions lie at residues 4255–4275 (SYTP…SFEG), 4303–4327 (SVAP…QKPS), and 4343–4376 (LSKK…SESC). Polar residues predominate over residues 4256–4265 (YTPSIPSDSR). Residues 4363–4374 (SEVQSLSSFQSE) are compositionally biased toward polar residues. A PTB-like motif motif is present at residues 4378 to 4382 (DNGYH). Disordered stretches follow at residues 4435–4479 (FPPP…SSSR) and 4565–4588 (ESGD…HTEV).

In terms of assembly, interacts (via the C-terminus 4300-4400 AA) with ATN1. Interacts with RERE. In terms of processing, undergoes proteolytic cleavage. The extracellular domain is cleaved off and the cytoplasmic domain (about 400 AA) shuttles to the nucleus. In terms of tissue distribution, expressed in many epithelial and some endothelial and smooth muscle cells.

It localises to the cell membrane. It is found in the nucleus. In terms of biological role, plays an essential role for cellular polarization, directed cell migration and modulating cell-cell contact. This is Protocadherin Fat 1 (FAT1) from Homo sapiens (Human).